The primary structure comprises 786 residues: LPS-assembly protein LptD (786 aa).

The first 24 residues, 1–24 (MKKRIPTLLATMIASALYSHQGLA), serve as a signal peptide directing secretion. 2 disulfides stabilise this stretch: C31–C726 and C173–C727.

This sequence belongs to the LptD family. In terms of assembly, component of the lipopolysaccharide transport and assembly complex. Interacts with LptE and LptA. In terms of processing, contains two intramolecular disulfide bonds.

Its subcellular location is the cell outer membrane. In terms of biological role, together with LptE, is involved in the assembly of lipopolysaccharide (LPS) at the surface of the outer membrane. The chain is LPS-assembly protein LptD from Salmonella choleraesuis (strain SC-B67).